The following is a 444-amino-acid chain: CRAL-TRIO domain-containing protein C3H8.02 (444 aa).

At S40 the chain carries Phosphoserine. T43 carries the post-translational modification Phosphothreonine. S81 is subject to Phosphoserine. The 160-residue stretch at 171–330 (DDDFVRQLRI…EFGGPNPWRY (160 aa)) folds into the CRAL-TRIO domain. T418 bears the Phosphothreonine mark.

This is CRAL-TRIO domain-containing protein C3H8.02 from Schizosaccharomyces pombe (strain 972 / ATCC 24843) (Fission yeast).